The chain runs to 137 residues: Nucleoside diphosphate kinase (137 aa).

Residues K9, F57, R85, T91, R102, and N112 each coordinate ATP. H115 acts as the Pros-phosphohistidine intermediate in catalysis.

Belongs to the NDK family. As to quaternary structure, homotetramer. Mg(2+) serves as cofactor.

It is found in the cytoplasm. It catalyses the reaction a 2'-deoxyribonucleoside 5'-diphosphate + ATP = a 2'-deoxyribonucleoside 5'-triphosphate + ADP. It carries out the reaction a ribonucleoside 5'-diphosphate + ATP = a ribonucleoside 5'-triphosphate + ADP. Functionally, major role in the synthesis of nucleoside triphosphates other than ATP. The ATP gamma phosphate is transferred to the NDP beta phosphate via a ping-pong mechanism, using a phosphorylated active-site intermediate. The polypeptide is Nucleoside diphosphate kinase (Syntrophotalea carbinolica (strain DSM 2380 / NBRC 103641 / GraBd1) (Pelobacter carbinolicus)).